The chain runs to 500 residues: NAD(P)H-quinone oxidoreductase chain 4, chloroplastic (500 aa).

14 consecutive transmembrane segments (helical) span residues 4-24 (FPWLTLIVIFPISAGSFLFFL), 35-55 (YTLCVCSLELLLTTYTFCYHF), 87-107 (FGPILLTGFITTLATLAAWPV), 134-154 (LLLFFMMWELELIPVYLLLSM), 167-187 (FILYTAGSSIFLLIGVLGIGL), 208-228 (ALEIIFYIGFLIAFAVKSPII), 242-262 (HYSTCMLLAGILLKMGAYGLV), 272-292 (AHSIFAPYLIIVGAIQIVYAA), 305-325 (IAYSSVSHMGFIIIGIGSITD), 330-350 (GALLQIISHGFIGAALFFLAG), 364-384 (MGGMAVAIPKIFTMFSILSMA), 386-406 (LALPGMSGFVAELIVFFGIIT), 416-436 (ILITFVMAIGMILTPIYSLSM), and 462-482 (LFVSISILLPVIGMGIYPDFL).

It belongs to the complex I subunit 4 family.

The protein resides in the plastid. It localises to the chloroplast thylakoid membrane. The catalysed reaction is a plastoquinone + NADH + (n+1) H(+)(in) = a plastoquinol + NAD(+) + n H(+)(out). The enzyme catalyses a plastoquinone + NADPH + (n+1) H(+)(in) = a plastoquinol + NADP(+) + n H(+)(out). The sequence is that of NAD(P)H-quinone oxidoreductase chain 4, chloroplastic from Pelargonium hortorum (Common geranium).